A 622-amino-acid chain; its full sequence is Dynein axonemal assembly factor 1 (622 aa).

Polar residues predominate over residues 1-11; that stretch reads MHPEVSEQQAD. The segment at 1–80 is disordered; sequence MHPEVSEQQA…ARNDRDDRGP (80 aa). Residues 32 to 42 are compositionally biased toward basic and acidic residues; sequence VRKEEINETKE. Low complexity predominate over residues 48–59; sequence STTSCQSQKQQS. The span at 62 to 80 shows a compositional bias: basic and acidic residues; the sequence is SRLECRSGYARNDRDDRGP. 6 LRR repeats span residues 101-123, 124-145, 146-167, 168-189, 190-211, and 215-236; these read ALNDTLYLHFKGFDRIENLEEYT, GLRCLWLECNGIQRIENLQAQS, ELRCLFLQVNLLHKIENLEPLQ, KLDALNLSNNYIKTIENLSCLP, VLNTLQMAHNRLETVADIQHLG, and RLCVLDLSHNMLSDPEILSVLE. The region spanning 249 to 288 is the LRRCT domain; it reads NPVTKHIPNYRRTVTVRLKQLTYLDDRPVFPKDRACAEAW. The span at 326–336 shows a compositional bias: basic and acidic residues; it reads EERKKARDKGE. The segment at 326–363 is disordered; sequence EERKKARDKGETPLPDSEESSSTSPEAQEKPPLGETQE. Positions 337–351 are enriched in low complexity; that stretch reads TPLPDSEESSSTSPE. S349, S464, and S487 each carry phosphoserine. Disordered stretches follow at residues 481-505 and 535-622; these read SSLSDDSDPELNDSSLPMLEHTPTG and TATT…FGLD. Polar residues-rich tracts occupy residues 535-552 and 568-578; these read TATTEVETQGQVFSTTRP and EPNQSLPAQSS.

This sequence belongs to the DNAAF1 family.

It localises to the cell projection. It is found in the cilium. Its function is as follows. Cilium-specific protein required for the stability of the ciliary architecture. Plays a role in cytoplasmic preassembly of dynein arms. Involved in regulation of microtubule-based cilia and actin-based brush border microvilli. This Peromyscus californicus (California mouse) protein is Dynein axonemal assembly factor 1 (Dnaaf1).